Consider the following 154-residue polypeptide: UPF0178 protein GM21_2006 (154 aa).

The protein belongs to the UPF0178 family.

The protein is UPF0178 protein GM21_2006 of Geobacter sp. (strain M21).